Reading from the N-terminus, the 69-residue chain is uncharacterized protein (69 aa).

At 1–15 (MLLYIVIIVACIISK) the chain is on the cytoplasmic side. Residues 16-36 (LVPNEYWAIHLFFIIMIFMVY) traverse the membrane as a helical segment. Over 37–69 (MYKKLDIHQKYQFWNYTMSGLSGHNVQVTCKCY) the chain is Extracellular. An N-linked (GlcNAc...) asparagine; by host glycan is attached at Asn51.

The protein belongs to the asfivirus X69R family.

The protein resides in the host membrane. This is an uncharacterized protein from African swine fever virus (isolate Tick/Malawi/Lil 20-1/1983) (ASFV).